We begin with the raw amino-acid sequence, 503 residues long: Glycerol kinase (503 aa).

An ADP-binding site is contributed by threonine 17. Threonine 17, threonine 18, and serine 19 together coordinate ATP. Threonine 17 serves as a coordination point for sn-glycerol 3-phosphate. Arginine 21 lines the ADP pocket. Residues arginine 87, glutamate 88, tyrosine 141, and aspartate 245 each contribute to the sn-glycerol 3-phosphate site. Glycerol is bound by residues arginine 87, glutamate 88, tyrosine 141, aspartate 245, and glutamine 246. Threonine 267 and glycine 310 together coordinate ADP. The ATP site is built by threonine 267, glycine 310, glutamine 314, and glycine 411. ADP-binding residues include glycine 411 and asparagine 415.

The protein belongs to the FGGY kinase family.

It carries out the reaction glycerol + ATP = sn-glycerol 3-phosphate + ADP + H(+). Its pathway is polyol metabolism; glycerol degradation via glycerol kinase pathway; sn-glycerol 3-phosphate from glycerol: step 1/1. Its activity is regulated as follows. Inhibited by fructose 1,6-bisphosphate (FBP). Its function is as follows. Key enzyme in the regulation of glycerol uptake and metabolism. Catalyzes the phosphorylation of glycerol to yield sn-glycerol 3-phosphate. The polypeptide is Glycerol kinase (Pseudomonas tolaasii).